The chain runs to 103 residues: Cell division topological specificity factor (103 aa).

It belongs to the MinE family.

Its function is as follows. Prevents the cell division inhibition by proteins MinC and MinD at internal division sites while permitting inhibition at polar sites. This ensures cell division at the proper site by restricting the formation of a division septum at the midpoint of the long axis of the cell. The protein is Cell division topological specificity factor of Prochlorococcus marinus (strain MIT 9211).